The chain runs to 1164 residues: Receptor-like protein kinase BRI1-like 3 (1164 aa).

An N-terminal signal peptide occupies residues 1–23 (MKQQWQFLILCLLVLFLTVDSRG). Topologically, residues 24-772 (RRLLSDDVND…RSHAHPKKQS (749 aa)) are extracellular. Residue N32 is glycosylated (N-linked (GlcNAc...) asparagine). Positions 65–72 (CTWRGVSC) match the Cys pair 1 motif. 20 LRR repeats span residues 77–98 (RVIG…NNLT), 102–123 (NLRS…SSSG), 125–146 (SLEV…DYVF), 151–173 (NLVS…PSAS), 176–197 (RITT…TFIA), 202–224 (SLKH…SFGL), 227–248 (NLTV…VSLS), 252–274 (LLET…DYWG), 278–300 (NLRQ…LSLL), 303–325 (TLEV…FTSC), 327–347 (SLQS…STVV), 352–375 (RITN…TNCS), 376–397 (NLRV…GFCS), 403–424 (VLEK…ELGK), 427–448 (SLKT…EIWT), 451–473 (KLSD…ICVD), 476–498 (NLET…ISKC), 500–523 (NMLW…GKLE), 524–546 (KLAI…LGNC), and 548–570 (NLIW…LASQ). N-linked (GlcNAc...) asparagine glycosylation is found at N96 and N112. N-linked (GlcNAc...) asparagine glycosylation is present at N156. N-linked (GlcNAc...) asparagine glycosylation is found at N212, N227, and N257. Residues N362 and N373 are each glycosylated (N-linked (GlcNAc...) asparagine). A glycan (N-linked (GlcNAc...) asparagine) is linked at N461. 3 N-linked (GlcNAc...) asparagine glycosylation sites follow: N532, N558, and N638. LRR repeat units follow at residues 640-662 (SMIY…YGAM), 664-686 (YLQV…FGGL), 688-711 (AIGV…GGLS), and 712-734 (FLSD…GQLT). N722 and N743 each carry an N-linked (GlcNAc...) asparagine glycan. A Cys pair 2 motif is present at residues 748 to 755 (CGVPLPPC). A helical membrane pass occupies residues 773 to 793 (IATGMSAGIVFSFMCIVMLIM). Topologically, residues 794–1164 (ALYRARKVQK…LVEESRDKEP (371 aa)) are cytoplasmic. Phosphothreonine occurs at positions 847 and 855. One can recognise a Protein kinase domain in the interval 858–1136 (FSADSMIGSG…QVMTMFKELV (279 aa)). Residues 864-872 (IGSGGFGDV) and K886 each bind ATP. The residue at position 931 (Y931) is a Phosphotyrosine. The active-site Proton acceptor is the D985. S1020 carries the post-translational modification Phosphoserine. At Y1028 the chain carries Phosphotyrosine.

The protein belongs to the protein kinase superfamily. Ser/Thr protein kinase family. Autophosphorylated on Tyr and Thr residues. In terms of tissue distribution, predominantly expressed in vascular tissues. Expressed only during postembryonic development with a very discrete pattern of expression, preferentially in the two protophloem cell files at the elongation zone of the root. The expression in these two cell files attenuates as the phloem cells differentiate in the upper root. In cotyledons and leaves, it is expressed in phloem cells, starting at the cotyledons and shoot apex, moving toward the basal part of the leaves, where the expression is weak. Expressed in the secondary and tertiary veins and in the upper part of the cotyledons and leaves. Weakly or not expressed in the inflorescence stems. Has some complementary expression with BRL1.

It localises to the cell membrane. It catalyses the reaction L-seryl-[protein] + ATP = O-phospho-L-seryl-[protein] + ADP + H(+). It carries out the reaction L-threonyl-[protein] + ATP = O-phospho-L-threonyl-[protein] + ADP + H(+). The catalysed reaction is L-tyrosyl-[protein] + ATP = O-phospho-L-tyrosyl-[protein] + ADP + H(+). In terms of biological role, receptor with a dual specificity kinase activity acting on both serine/threonine- and tyrosine-containing substrates. Binds brassinolide. Regulates, in response to brassinosteroid binding, a signaling cascade involved in plant development. May be involved in cell growth and vascular differentiation. The polypeptide is Receptor-like protein kinase BRI1-like 3 (BRL3) (Arabidopsis thaliana (Mouse-ear cress)).